The chain runs to 205 residues: Holliday junction branch migration complex subunit RuvA (205 aa).

The tract at residues 1-64 is domain I; the sequence is MIGKLKGLID…EDQIKLFGFR (64 aa). The tract at residues 65-143 is domain II; sequence SDVEREWFRL…AFADVDPGVI (79 aa). The interval 144–154 is flexible linker; sequence RLSGAIEDSRA. The tract at residues 154 to 205 is domain III; sequence APQPIADAISALINLGYGQPQAAAAIAAASRAAGDKAETAQLIRLGLKELAK.

The protein belongs to the RuvA family. In terms of assembly, homotetramer. Forms an RuvA(8)-RuvB(12)-Holliday junction (HJ) complex. HJ DNA is sandwiched between 2 RuvA tetramers; dsDNA enters through RuvA and exits via RuvB. An RuvB hexamer assembles on each DNA strand where it exits the tetramer. Each RuvB hexamer is contacted by two RuvA subunits (via domain III) on 2 adjacent RuvB subunits; this complex drives branch migration. In the full resolvosome a probable DNA-RuvA(4)-RuvB(12)-RuvC(2) complex forms which resolves the HJ.

The protein localises to the cytoplasm. Functionally, the RuvA-RuvB-RuvC complex processes Holliday junction (HJ) DNA during genetic recombination and DNA repair, while the RuvA-RuvB complex plays an important role in the rescue of blocked DNA replication forks via replication fork reversal (RFR). RuvA specifically binds to HJ cruciform DNA, conferring on it an open structure. The RuvB hexamer acts as an ATP-dependent pump, pulling dsDNA into and through the RuvAB complex. HJ branch migration allows RuvC to scan DNA until it finds its consensus sequence, where it cleaves and resolves the cruciform DNA. The chain is Holliday junction branch migration complex subunit RuvA from Bradyrhizobium sp. (strain BTAi1 / ATCC BAA-1182).